The chain runs to 569 residues: uncharacterized protein (569 aa).

The chain crosses the membrane as a helical span at residues 2–22 (VVIAALLGSLAVLAFLFYLWY).

Its subcellular location is the membrane. This is an uncharacterized protein from Mycoplasma pneumoniae (strain ATCC 29342 / M129 / Subtype 1) (Mycoplasmoides pneumoniae).